Reading from the N-terminus, the 428-residue chain is Trigger factor (428 aa).

The PPIase FKBP-type domain maps to 163-248 (GDTAIIDFEG…INDVKVKELS (86 aa)).

The protein belongs to the FKBP-type PPIase family. Tig subfamily.

The protein localises to the cytoplasm. It catalyses the reaction [protein]-peptidylproline (omega=180) = [protein]-peptidylproline (omega=0). Involved in protein export. Acts as a chaperone by maintaining the newly synthesized protein in an open conformation. Functions as a peptidyl-prolyl cis-trans isomerase. The sequence is that of Trigger factor from Clostridioides difficile (strain 630) (Peptoclostridium difficile).